The primary structure comprises 351 residues: Ribosomal RNA small subunit methyltransferase H (351 aa).

S-adenosyl-L-methionine is bound by residues 48-50 (GGY), aspartate 67, phenylalanine 94, aspartate 115, and glutamine 122. The segment at 274–351 (AAQASRHVPG…PAPQGRGPRR (78 aa)) is disordered.

It belongs to the methyltransferase superfamily. RsmH family.

The protein resides in the cytoplasm. It carries out the reaction cytidine(1402) in 16S rRNA + S-adenosyl-L-methionine = N(4)-methylcytidine(1402) in 16S rRNA + S-adenosyl-L-homocysteine + H(+). In terms of biological role, specifically methylates the N4 position of cytidine in position 1402 (C1402) of 16S rRNA. This Methylorubrum extorquens (strain ATCC 14718 / DSM 1338 / JCM 2805 / NCIMB 9133 / AM1) (Methylobacterium extorquens) protein is Ribosomal RNA small subunit methyltransferase H.